Reading from the N-terminus, the 77-residue chain is Translation initiation factor IF-1, chloroplastic (77 aa).

Positions 1–71 constitute an S1-like domain; sequence MKEQKWIHEG…TKGRIIYRIR (71 aa).

The protein belongs to the IF-1 family. In terms of assembly, component of the 30S ribosomal translation pre-initiation complex which assembles on the 30S ribosome in the order IF-2 and IF-3, IF-1 and N-formylmethionyl-tRNA(fMet); mRNA recruitment can occur at any time during PIC assembly.

Its subcellular location is the plastid. The protein resides in the chloroplast. Its function is as follows. One of the essential components for the initiation of protein synthesis. Stabilizes the binding of IF-2 and IF-3 on the 30S subunit to which N-formylmethionyl-tRNA(fMet) subsequently binds. Helps modulate mRNA selection, yielding the 30S pre-initiation complex (PIC). Upon addition of the 50S ribosomal subunit IF-1, IF-2 and IF-3 are released leaving the mature 70S translation initiation complex. The polypeptide is Translation initiation factor IF-1, chloroplastic (Vitis vinifera (Grape)).